The primary structure comprises 1333 residues: DNA-directed RNA polymerase subunit beta' (1333 aa).

4 residues coordinate Zn(2+): Cys60, Cys62, Cys75, and Cys78. The Mg(2+) site is built by Asp535, Asp537, and Asp539. Zn(2+)-binding residues include Cys901, Cys983, Cys990, and Cys993.

Belongs to the RNA polymerase beta' chain family. In terms of assembly, the RNAP catalytic core consists of 2 alpha, 1 beta, 1 beta' and 1 omega subunit. When a sigma factor is associated with the core the holoenzyme is formed, which can initiate transcription. Requires Mg(2+) as cofactor. The cofactor is Zn(2+).

The enzyme catalyses RNA(n) + a ribonucleoside 5'-triphosphate = RNA(n+1) + diphosphate. DNA-dependent RNA polymerase catalyzes the transcription of DNA into RNA using the four ribonucleoside triphosphates as substrates. The chain is DNA-directed RNA polymerase subunit beta' from Corynebacterium glutamicum (strain R).